We begin with the raw amino-acid sequence, 282 residues long: 4-hydroxy-3-methylbut-2-enyl diphosphate reductase (282 aa).

Cys12 lines the [4Fe-4S] cluster pocket. 2 residues coordinate (2E)-4-hydroxy-3-methylbut-2-enyl diphosphate: His40 and His72. His40 and His72 together coordinate dimethylallyl diphosphate. Isopentenyl diphosphate is bound by residues His40 and His72. Cys94 contacts [4Fe-4S] cluster. His122 is a (2E)-4-hydroxy-3-methylbut-2-enyl diphosphate binding site. A dimethylallyl diphosphate-binding site is contributed by His122. His122 contacts isopentenyl diphosphate. The Proton donor role is filled by Glu124. Residue Thr160 coordinates (2E)-4-hydroxy-3-methylbut-2-enyl diphosphate. Residue Cys188 participates in [4Fe-4S] cluster binding. Residues Ser216, Asn218, and Ser260 each coordinate (2E)-4-hydroxy-3-methylbut-2-enyl diphosphate. Dimethylallyl diphosphate-binding residues include Ser216, Asn218, and Ser260. Residues Ser216, Asn218, and Ser260 each contribute to the isopentenyl diphosphate site.

It belongs to the IspH family. It depends on [4Fe-4S] cluster as a cofactor.

It carries out the reaction isopentenyl diphosphate + 2 oxidized [2Fe-2S]-[ferredoxin] + H2O = (2E)-4-hydroxy-3-methylbut-2-enyl diphosphate + 2 reduced [2Fe-2S]-[ferredoxin] + 2 H(+). The enzyme catalyses dimethylallyl diphosphate + 2 oxidized [2Fe-2S]-[ferredoxin] + H2O = (2E)-4-hydroxy-3-methylbut-2-enyl diphosphate + 2 reduced [2Fe-2S]-[ferredoxin] + 2 H(+). It functions in the pathway isoprenoid biosynthesis; dimethylallyl diphosphate biosynthesis; dimethylallyl diphosphate from (2E)-4-hydroxy-3-methylbutenyl diphosphate: step 1/1. The protein operates within isoprenoid biosynthesis; isopentenyl diphosphate biosynthesis via DXP pathway; isopentenyl diphosphate from 1-deoxy-D-xylulose 5-phosphate: step 6/6. Catalyzes the conversion of 1-hydroxy-2-methyl-2-(E)-butenyl 4-diphosphate (HMBPP) into a mixture of isopentenyl diphosphate (IPP) and dimethylallyl diphosphate (DMAPP). Acts in the terminal step of the DOXP/MEP pathway for isoprenoid precursor biosynthesis. The protein is 4-hydroxy-3-methylbut-2-enyl diphosphate reductase of Geobacter sulfurreducens (strain ATCC 51573 / DSM 12127 / PCA).